Reading from the N-terminus, the 426-residue chain is Vacuole membrane protein hfl11 (426 aa).

Helical transmembrane passes span serine 39–tyrosine 59, isoleucine 73–glutamate 93, glycine 133–valine 153, isoleucine 172–valine 192, and valine 223–leucine 243. Position 364 is a phosphoserine (serine 364). The ATG8-interacting region stretch occupies residues leucine 386–tyrosine 409.

Belongs to the TMEM184 family. As to quaternary structure, interacts with atg8.

The protein resides in the vacuole membrane. In terms of biological role, vacuole membrane protein that recruits ATG8 to facilitate the degradation of vacuolar integral membrane proteins during early-stationary vacuole turnover (EVT) when cells enter stationary phase. The protein is Vacuole membrane protein hfl11 of Schizosaccharomyces pombe (strain 972 / ATCC 24843) (Fission yeast).